A 77-amino-acid chain; its full sequence is Small ribosomal subunit protein uS17 (77 aa).

This sequence belongs to the universal ribosomal protein uS17 family. Part of the 30S ribosomal subunit.

Functionally, one of the primary rRNA binding proteins, it binds specifically to the 5'-end of 16S ribosomal RNA. The polypeptide is Small ribosomal subunit protein uS17 (Wolbachia sp. subsp. Brugia malayi (strain TRS)).